Reading from the N-terminus, the 1030-residue chain is Germ cell nuclear acidic protein (1030 aa).

Disordered regions lie at residues 1–59 (MADH…TEDT), 196–245 (EWNG…TQLA), 266–361 (KRLA…VSSI), 375–433 (TMES…EQFL), 457–594 (LKRS…DLTY), and 699–764 (KLGI…PVAS). The segment covering 20–33 (APKDHPEKRNDQKT) has biased composition (basic and acidic residues). Composition is skewed to polar residues over residues 298 to 316 (EPNTLCSDSSETHNSTIHN) and 329 to 349 (ETSSEGELTPQKASSGSSTSG). Over residues 505-516 (LRTNQTPLNSTR) the composition is skewed to polar residues. Composition is skewed to basic and acidic residues over residues 541–553 (NHIDEDRWRKLID) and 578–594 (DSDKDKENKQKRGDLTY). The segment covering 720-748 (TPKTAPPKGTAPPKTSAPPKVSTPPKSTK) has biased composition (low complexity).

Belongs to the serine-aspartate repeat-containing protein (SDr) family.

The protein resides in the cytoplasm. Its subcellular location is the chromosome. Its function is as follows. May play a role in DNA-protein cross-links (DPCs) clearance, ensuring the genomic stability by protecting germ cells and early embryos from various sources of damage. Limits replication stress and DNA double-strand breaks. This is Germ cell nuclear acidic protein from Drosophila melanogaster (Fruit fly).